A 251-amino-acid polypeptide reads, in one-letter code: uncharacterized protein (251 aa).

A divalent metal cation is bound by residues His6, His8, Glu90, His130, His154, and Asp202.

The protein belongs to the metallo-dependent hydrolases superfamily. TatD-type hydrolase family. It depends on a divalent metal cation as a cofactor.

This is an uncharacterized protein from Haemophilus influenzae (strain ATCC 51907 / DSM 11121 / KW20 / Rd).